Here is a 206-residue protein sequence, read N- to C-terminus: LOB domain-containing protein 2 (206 aa).

Positions 1–20 are disordered; sequence MMQRNSNNTSITSNISNNSS. One can recognise an LOB domain in the interval 23–123; it reads QACASCKHQR…KSLVHNQPLI (101 aa).

The protein belongs to the LOB domain-containing protein family.

This chain is LOB domain-containing protein 2 (LBD2), found in Arabidopsis thaliana (Mouse-ear cress).